The chain runs to 191 residues: Ribosome maturation factor RimM (191 aa).

Residues 99–172 (TDEFYQIDLI…FLVVDPVAAG (74 aa)) enclose the PRC barrel domain.

Belongs to the RimM family. As to quaternary structure, binds ribosomal protein uS19.

The protein localises to the cytoplasm. An accessory protein needed during the final step in the assembly of 30S ribosomal subunit, possibly for assembly of the head region. Essential for efficient processing of 16S rRNA. May be needed both before and after RbfA during the maturation of 16S rRNA. It has affinity for free ribosomal 30S subunits but not for 70S ribosomes. The protein is Ribosome maturation factor RimM of Bartonella bacilliformis (strain ATCC 35685 / KC583 / Herrer 020/F12,63).